The following is a 350-amino-acid chain: Protein RecA (350 aa).

ATP is bound at residue 68 to 75 (GPESSGKT).

Belongs to the RecA family.

Its subcellular location is the cytoplasm. Functionally, can catalyze the hydrolysis of ATP in the presence of single-stranded DNA, the ATP-dependent uptake of single-stranded DNA by duplex DNA, and the ATP-dependent hybridization of homologous single-stranded DNAs. It interacts with LexA causing its activation and leading to its autocatalytic cleavage. This Mycolicibacterium vanbaalenii (strain DSM 7251 / JCM 13017 / BCRC 16820 / KCTC 9966 / NRRL B-24157 / PYR-1) (Mycobacterium vanbaalenii) protein is Protein RecA.